Here is a 713-residue protein sequence, read N- to C-terminus: Endopolyphosphatase (713 aa).

Residues 1 to 19 (MSVLIDEKSHRSSGSTRSR) lie on the Cytoplasmic side of the membrane. Residues 20–40 (IVVTVVGVLLMVSGLAVMLGH) traverse the membrane as a helical; Signal-anchor for type II membrane protein segment. Topologically, residues 41-713 (QSGSANEALG…SSEYENMGMG (673 aa)) are vacuolar. Residues 399–418 (SDDDDNSDSDSDDDDEDTSL) are compositionally biased toward acidic residues. The disordered stretch occupies residues 399-430 (SDDDDNSDSDSDDDDEDTSLEESYSNFNSPIL). N-linked (GlcNAc...) asparagine glycosylation is found at Asn507 and Asn645. Basic residues predominate over residues 640 to 659 (VKEKKNKSNKKSKKKKKNKD). The tract at residues 640-684 (VKEKKNKSNKKSKKKKKNKDKRLLENSEPLKQDGSKDSRLEQDRV) is disordered. The segment covering 660–683 (KRLLENSEPLKQDGSKDSRLEQDR) has biased composition (basic and acidic residues).

Belongs to the endopolyphosphatase PPN1 family. The cofactor is a divalent metal cation. Processing by proteases in the vacuole may be required for activation.

The protein localises to the vacuole membrane. It catalyses the reaction [phosphate](n+1) + n H2O = (n+1) phosphate + n H(+). Its function is as follows. Catalyzes the hydrolysis of inorganic polyphosphate (polyP) chains of many hundreds of phosphate residues into shorter lengths. This is Endopolyphosphatase (PPN1) from Debaryomyces hansenii (strain ATCC 36239 / CBS 767 / BCRC 21394 / JCM 1990 / NBRC 0083 / IGC 2968) (Yeast).